Here is a 294-residue protein sequence, read N- to C-terminus: Nucleophosmin (294 aa).

The span at 121-133 (LEEEPESEDEEED) shows a compositional bias: acidic residues. Residues 121–244 (LEEEPESEDE…PKTPKVPLSL (124 aa)) form a disordered region. The short motif at 153–158 (PQKKPK) is the Nuclear localization signal element. Acidic residues predominate over residues 161-186 (EDDEDDDEDEDDDEDDEDDLDDDEEE). Positions 190-196 (PMKKPAR) match the Nuclear localization signal motif. Basic and acidic residues predominate over residues 223–233 (KTPDSKKDKSL).

It belongs to the nucleoplasmin family. Decamer formed by two pentameric rings associated in a head-to-head fashion. In terms of processing, phosphorylated.

The protein resides in the cytoplasm. Its subcellular location is the nucleus. It localises to the nucleoplasm. The protein localises to the nucleolus. Its function is as follows. Acts as a chaperonin for the core histones H3, H2B and H4. Associated with nucleolar ribonucleoprotein structures and bind single-stranded nucleic acids. It may function in the assembly and/or transport of ribosome. May stimulate endonuclease activity on apurinic/apyrimidinic (AP) double-stranded DNA. May inhibit endonuclease activity on AP single-stranded RNA. The chain is Nucleophosmin (NPM1) from Gallus gallus (Chicken).